A 366-amino-acid polypeptide reads, in one-letter code: Histone-lysine N-methyltransferase SETD7 (366 aa).

3 MORN repeats span residues 36–58, 59–81, and 106–128; these read FEGH…DGST, LEGF…DGGS, and FKGQ…DGGS. The region spanning 214 to 336 is the SET domain; it reads ERVYVNDSLI…KDEELTVAYG (123 aa). Residues 226–228, N296, and H297 each bind S-adenosyl-L-methionine; that span reads AGE.

The protein belongs to the class V-like SAM-binding methyltransferase superfamily. Histone-lysine methyltransferase family. SET7 subfamily.

Its subcellular location is the nucleus. It localises to the chromosome. It carries out the reaction L-lysyl(4)-[histone H3] + S-adenosyl-L-methionine = N(6)-methyl-L-lysyl(4)-[histone H3] + S-adenosyl-L-homocysteine + H(+). The enzyme catalyses L-lysyl-[protein] + S-adenosyl-L-methionine = N(6)-methyl-L-lysyl-[protein] + S-adenosyl-L-homocysteine + H(+). Functionally, histone methyltransferase that specifically monomethylates 'Lys-4' of histone H3. H3 'Lys-4' methylation represents a specific tag for epigenetic transcriptional activation. Plays a central role in the transcriptional activation of genes. Also has methyltransferase activity toward non-histone proteins. The chain is Histone-lysine N-methyltransferase SETD7 (setd7) from Xenopus tropicalis (Western clawed frog).